The sequence spans 366 residues: NADH-quinone oxidoreductase subunit D (366 aa).

The protein belongs to the complex I 49 kDa subunit family. As to quaternary structure, NDH-1 is composed of 14 different subunits. Subunits NuoB, C, D, E, F, and G constitute the peripheral sector of the complex.

It is found in the cell membrane. It carries out the reaction a quinone + NADH + 5 H(+)(in) = a quinol + NAD(+) + 4 H(+)(out). In terms of biological role, NDH-1 shuttles electrons from NADH, via FMN and iron-sulfur (Fe-S) centers, to quinones in the respiratory chain. The immediate electron acceptor for the enzyme in this species is believed to be a menaquinone. Couples the redox reaction to proton translocation (for every two electrons transferred, four hydrogen ions are translocated across the cytoplasmic membrane), and thus conserves the redox energy in a proton gradient. The protein is NADH-quinone oxidoreductase subunit D of Bacillus anthracis.